The sequence spans 78 residues: Small ribosomal subunit protein bS16c (78 aa).

It belongs to the bacterial ribosomal protein bS16 family.

The protein resides in the plastid. The protein localises to the chloroplast. The sequence is that of Small ribosomal subunit protein bS16c from Chara vulgaris (Common stonewort).